A 405-amino-acid polypeptide reads, in one-letter code: Threonine synthase (405 aa).

Lys104 is modified (N6-(pyridoxal phosphate)lysine). Residues Asn130, 231-235 (GNAGN), and Thr369 each bind pyridoxal 5'-phosphate.

Belongs to the threonine synthase family. As to quaternary structure, homotrimer. Requires pyridoxal 5'-phosphate as cofactor.

The enzyme catalyses O-phospho-L-homoserine + H2O = L-threonine + phosphate. It functions in the pathway amino-acid biosynthesis; L-threonine biosynthesis; L-threonine from L-aspartate: step 5/5. In terms of biological role, catalyzes the gamma-elimination of phosphate from L-phosphohomoserine and the beta-addition of water to produce L-threonine. Does not catalyze the conversion of O-acetyl-L-homoserine into threonine. In Methanosarcina acetivorans (strain ATCC 35395 / DSM 2834 / JCM 12185 / C2A), this protein is Threonine synthase (thrC).